Here is a 343-residue protein sequence, read N- to C-terminus: Heat-inducible transcription repressor HrcA (343 aa).

Belongs to the HrcA family.

In terms of biological role, negative regulator of class I heat shock genes (grpE-dnaK-dnaJ and groELS operons). Prevents heat-shock induction of these operons. The chain is Heat-inducible transcription repressor HrcA from Mycolicibacterium gilvum (strain PYR-GCK) (Mycobacterium gilvum (strain PYR-GCK)).